The chain runs to 621 residues: Autonomous transposable element EN-1 mosaic protein (621 aa).

Disordered stretches follow at residues 1 to 119 (MFRM…PPRR), 428 to 447 (YTRR…PSAR), 498 to 530 (QQPP…TSVQ), and 549 to 621 (RQPG…PPTE). Polar residues-rich tracts occupy residues 27–39 (EGTT…QEQL) and 47–61 (RGSS…TTSR). Positions 82 to 102 (AAVDAEAEEAAAELDDGEETS) are enriched in acidic residues. The span at 570–594 (PPRGQSQSPGLPSHSPGSGSGSHHA) shows a compositional bias: low complexity.

This protein has most probably three functions; the mutator (M) function, for excision and transposition; the suppressor (S) function, which inhibits residual gene activity of certain alleles in which inhibitor elements are integrated; an activator (A) function is proposed, because inactive SPM can be activated by a second SPM. In Zea mays (Maize), this protein is Autonomous transposable element EN-1 mosaic protein.